The following is a 395-amino-acid chain: LL-diaminopimelate aminotransferase (395 aa).

Substrate is bound by residues Y14 and G41. Residues Y71, 104 to 105, Y128, N174, Y205, and 233 to 235 each bind pyridoxal 5'-phosphate; these read AK and SFS. 3 residues coordinate substrate: K105, Y128, and N174. Position 236 is an N6-(pyridoxal phosphate)lysine (K236). Pyridoxal 5'-phosphate-binding residues include R244 and N275. Residues N275 and R368 each coordinate substrate.

It belongs to the class-I pyridoxal-phosphate-dependent aminotransferase family. LL-diaminopimelate aminotransferase subfamily. As to quaternary structure, homodimer. Pyridoxal 5'-phosphate is required as a cofactor.

The catalysed reaction is (2S,6S)-2,6-diaminopimelate + 2-oxoglutarate = (S)-2,3,4,5-tetrahydrodipicolinate + L-glutamate + H2O + H(+). It participates in amino-acid biosynthesis; L-lysine biosynthesis via DAP pathway; LL-2,6-diaminopimelate from (S)-tetrahydrodipicolinate (aminotransferase route): step 1/1. Functionally, involved in the synthesis of meso-diaminopimelate (m-DAP or DL-DAP), required for both lysine and peptidoglycan biosynthesis. Catalyzes the direct conversion of tetrahydrodipicolinate to LL-diaminopimelate. This chain is LL-diaminopimelate aminotransferase, found in Chlamydia caviae (strain ATCC VR-813 / DSM 19441 / 03DC25 / GPIC) (Chlamydophila caviae).